The sequence spans 177 residues: Phycoerythrin beta subunit (177 aa).

The (2R,3E)-phycoerythrobilin site is built by Tyr-18, Lys-28, Asn-35, and Asp-39. Cys-50, Asp-54, and Cys-61 together coordinate 15,16-dihydrobiliverdin. Residues Cys-82, Arg-84, and Asp-85 each coordinate (2R,3E)-phycoerythrobilin. Position 129 (Arg-129) interacts with 15,16-dihydrobiliverdin. Asn-144 provides a ligand contact to (2R,3E)-phycoerythrobilin. Residues Gln-148 and Lys-149 each coordinate 15,16-dihydrobiliverdin. Residues Pro-154, Gly-156, and Cys-158 each coordinate (2R,3E)-phycoerythrobilin.

This sequence belongs to the phycobiliprotein family. Heterotetramer of 2 different alpha chains and 2 identical beta chains which form 2 alpha-beta heterodimers within the heterotetramer. The two alpha-beta heterodimers are rotated to an open configuration in contrast to the closed configuration found in other cryptophyte species due to the insertion of a single amino acid, 'Asp-65', in a conserved region of the alpha chain. In the open form, the central chromophores are not in physical contact but are separated by a water-filled channel. In terms of processing, contains three phycoerythrobilin chromophores and one 15,16-dihydrobiliverdin chromophore with binding of the phycoerythrobilin chromophores mediated by both the alpha and beta subunits.

It localises to the plastid. Its subcellular location is the chloroplast thylakoid membrane. In terms of biological role, light-harvesting photosynthetic bile pigment-protein from the phycobiliprotein complex. The protein is Phycoerythrin beta subunit of Hemiselmis andersenii (Cryptophyte alga).